We begin with the raw amino-acid sequence, 221 residues long: MPKLLPAQEAARIYHTNYVRNARAMGVLWALFTLCFSILMVVTFIQPYWIGDSIDTPQAGYFGLFSYCIGNALTGELICKGSPLDFGTIPSSAFKTAMFFVGISTFLIIGSILCFSLFFFCNAATVYKVCAWMQLAAATGLMIGCLIYPDGWDSSEVKRMCGDKTDKYTLGACTVRWAYILCIIGILDALILSFLAFVLGNRQDNLLPSDFKVESKEEGNE.

Topologically, residues Met1–Ala24 are cytoplasmic. A helical membrane pass occupies residues Met25–Ile45. Residues Gln46–Met98 lie on the Extracellular side of the membrane. The helical transmembrane segment at Phe99–Phe119 threads the bilayer. The Cytoplasmic segment spans residues Phe120–Lys128. The chain crosses the membrane as a helical span at residues Val129–Pro149. At Asp150 to Tyr179 the chain is on the extracellular side. A helical transmembrane segment spans residues Ile180–Gly200. The Cytoplasmic segment spans residues Asn201 to Glu221.

This sequence belongs to the LHFP family.

It is found in the cell membrane. Functionally, probable component of the mechanotransducer (MET) non-specific cation channel complex. The polypeptide is LHFPL tetraspan subfamily member 5 protein (Gallus gallus (Chicken)).